Reading from the N-terminus, the 163-residue chain is MRHNKKFNHLGRTASHRSAMLSNMACSLIKHKRITTTVAKAKALKKFVEPLITKSKEDTTNSRRVVFSNLQDKIAVTELFKEISVKIADRPGGYTRIIKTGNRLGDNAEMCFIELVDYNENMAKEKVAKKATRTRRSKKSAEAAAPAAVEAPATEEPKAESAE.

The tract at residues 127-163 (VAKKATRTRRSKKSAEAAAPAAVEAPATEEPKAESAE) is disordered. Residues 129–138 (KKATRTRRSK) show a composition bias toward basic residues. The span at 142–154 (EAAAPAAVEAPAT) shows a compositional bias: low complexity.

The protein belongs to the bacterial ribosomal protein bL17 family. Part of the 50S ribosomal subunit. Contacts protein L32.

In Bacteroides thetaiotaomicron (strain ATCC 29148 / DSM 2079 / JCM 5827 / CCUG 10774 / NCTC 10582 / VPI-5482 / E50), this protein is Large ribosomal subunit protein bL17.